The sequence spans 160 residues: MAPK regulated corepressor interacting protein 2 (160 aa).

An N-acetylmethionine modification is found at Met1. The interval 1-64 (MYTITKGPSK…GPWPLSSPGP (64 aa)) is disordered. Arg35 carries the post-translational modification Omega-N-methylarginine. Pro residues predominate over residues 37 to 61 (PAPPTSQPPRAQPFAQPPGPWPLSS). Ser61 bears the Phosphoserine mark. The residue at position 65 (Arg65) is an Omega-N-methylarginine. Ser82 is modified (phosphoserine).

It belongs to the MCRIP family. In terms of assembly, interacts with DDX6. Interacts with MCRIP1.

It is found in the cytoplasm. The protein resides in the stress granule. It localises to the nucleus. This Homo sapiens (Human) protein is MAPK regulated corepressor interacting protein 2 (MCRIP2).